The sequence spans 359 residues: 3-dehydroquinate synthase (359 aa).

NAD(+) is bound by residues 71-76 (DGEAHK), 105-109 (GVIGD), 129-130 (TT), lysine 142, lysine 151, and 169-172 (TLHT). Zn(2+) is bound by residues glutamate 184, histidine 247, and histidine 264.

The protein belongs to the sugar phosphate cyclases superfamily. Dehydroquinate synthase family. Co(2+) is required as a cofactor. It depends on Zn(2+) as a cofactor. The cofactor is NAD(+).

It localises to the cytoplasm. The catalysed reaction is 7-phospho-2-dehydro-3-deoxy-D-arabino-heptonate = 3-dehydroquinate + phosphate. Its pathway is metabolic intermediate biosynthesis; chorismate biosynthesis; chorismate from D-erythrose 4-phosphate and phosphoenolpyruvate: step 2/7. Functionally, catalyzes the conversion of 3-deoxy-D-arabino-heptulosonate 7-phosphate (DAHP) to dehydroquinate (DHQ). The chain is 3-dehydroquinate synthase from Neisseria gonorrhoeae (strain ATCC 700825 / FA 1090).